Here is a 479-residue protein sequence, read N- to C-terminus: MPHEKQDRDAEEIEDEGKNIILGIVSQLRPNMDLSKVTFPTFVLEPKSMLERITNFMSHPDLLLNVQKTADPEMRFLDVVRFYMSGWHIRPRGVKKPLNPILGETFTGFWKFPPSNSKDPNLQKLHGIAVYAAEQVCHHPPISAYFYLCPEYKVRIDGVVKPRSRFLGNSAASIMEGIASIKLQDLDEEYLITQPNVYARGILFGKMRLELGDHVTVRCPKTDLQADIEFKVKGFISGTYNSIAGKVKRVSTGEVLYKISGKWDSEMSVESVKTGETRPLLDVSKHDVYLVSARPLEEQGERESQRLWYKTCQAVIARDQTTATETKSAIEDRQREEAKQREIENVQWKPKYFKMIAPEEYILNFDIPNGKSDLEVLCALDEFIPIFSEVDRIAFHKFLSENTKPEDSSIHKHSRDASGDSTKGFAEHMPAPARRRRPQSTASFVTYRSDNGSVDEYHDAQLPDPNTLSKLHEEQDPAL.

Ser-328, Ser-408, Ser-409, and Ser-421 each carry phosphoserine. Residues 404-418 are compositionally biased toward basic and acidic residues; sequence KPEDSSIHKHSRDAS. The disordered stretch occupies residues 404-479; that stretch reads KPEDSSIHKH…KLHEEQDPAL (76 aa). Positions 439–452 are enriched in polar residues; it reads QSTASFVTYRSDNG. Over residues 470-479 the composition is skewed to basic and acidic residues; sequence KLHEEQDPAL.

Belongs to the OSBP family.

The protein localises to the cytoplasm. The protein resides in the nucleus. The polypeptide is Oxysterol-binding protein homolog C23B6.01c (Schizosaccharomyces pombe (strain 972 / ATCC 24843) (Fission yeast)).